We begin with the raw amino-acid sequence, 148 residues long: Translation initiation factor 2 subunit beta (148 aa).

This sequence belongs to the eIF-2-beta/eIF-5 family. In terms of assembly, heterotrimer composed of an alpha, a beta and a gamma chain.

Functionally, eIF-2 functions in the early steps of protein synthesis by forming a ternary complex with GTP and initiator tRNA. The protein is Translation initiation factor 2 subunit beta (eif2b) of Aeropyrum pernix (strain ATCC 700893 / DSM 11879 / JCM 9820 / NBRC 100138 / K1).